A 245-amino-acid polypeptide reads, in one-letter code: PF03932 family protein CutC (245 aa).

It belongs to the CutC family.

The protein resides in the cytoplasm. The chain is PF03932 family protein CutC from Photobacterium profundum (strain SS9).